The following is a 419-amino-acid chain: CDP-diacylglycerol--serine O-phosphatidyltransferase 3 (419 aa).

The disordered stretch occupies residues 1–51 (MPVRRRWYPPSSTAAQPSPDGGDVNTDDADACPSSRQQRPPSLPQHSAPIH). Residues 33-47 (PSSRQQRPPSLPQHS) show a composition bias toward low complexity. 7 helical membrane passes run 103–123 (PHTVSVLLAGACLLIWASGVL), 142–162 (WAMIAVFLAYCTLQAPSTILI), 168–188 (VWRLVHGMAVVYLVALTFLLF), 260–280 (LLLWVLSVGFELMELTFRHML), 287–307 (WWDSIILDIMICNWFGIWAGM), 359–379 (FIQVFCLCVGFMTVELNTFFL), and 384–404 (WIPPRNPLVVYRLILWWLIAI).

It belongs to the CDP-alcohol phosphatidyltransferase class-I family.

It is found in the endoplasmic reticulum membrane. The catalysed reaction is a CDP-1,2-diacyl-sn-glycerol + L-serine = a 1,2-diacyl-sn-glycero-3-phospho-L-serine + CMP + H(+). It functions in the pathway phospholipid metabolism; phosphatidylethanolamine biosynthesis; phosphatidylethanolamine from CDP-diacylglycerol: step 1/2. In terms of biological role, catalyzes a base-exchange reaction in which the polar head group of phosphatidylethanolamine (PE) or phosphatidylcholine (PC) is replaced by L-serine. In Oryza sativa subsp. japonica (Rice), this protein is CDP-diacylglycerol--serine O-phosphatidyltransferase 3 (PSS3).